A 209-amino-acid polypeptide reads, in one-letter code: MSDFGINLDAICDNVRRNSSNSSIKSQVSNRSSRKMDFVDEDELSTYFNSKTSVTQSDSCSNDLNVKHSIIAEAVVCDESAHVSADAVQEKDVVVPKMDESVMKWMMDSHDGICVNGGLNFSKLKNKSNEHETKVTSETNVSAHVSAGINSQLGMFNPIQHKIKKEAIPEMFEDEDTDECTCRNCPYKEKYLKLRKKLKNVLVDIITEM.

A Mg(2+)-binding site is contributed by aspartate 86.

It belongs to the rotavirus NSP5 family. As to quaternary structure, homodimer. Interacts with VP1. Interacts with VP2. Interacts with NSP2 and NSP6. Mg(2+) serves as cofactor. In terms of processing, O-glycosylated.

The protein resides in the host cytoplasm. In terms of biological role, plays an essential role in the viral genome replication. Participates, together with NSP2, in the formation of viral factories (viroplasms) which are large inclusions in the host cytoplasm where replication intermediates are assembled and viral RNA replication takes place. Orchestrates the recruitment of viroplasmic proteins such as capsid proteins to these factories. This is Non-structural protein 5 from Bos taurus (Bovine).